A 310-amino-acid polypeptide reads, in one-letter code: Aspartate carbamoyltransferase catalytic subunit (310 aa).

Carbamoyl phosphate-binding residues include Arg58 and Thr59. An L-aspartate-binding site is contributed by Lys87. Carbamoyl phosphate is bound by residues Arg108, His136, and Gln139. Residues Arg169 and Arg229 each coordinate L-aspartate. Leu268 and Pro269 together coordinate carbamoyl phosphate.

This sequence belongs to the aspartate/ornithine carbamoyltransferase superfamily. ATCase family. In terms of assembly, heterododecamer (2C3:3R2) of six catalytic PyrB chains organized as two trimers (C3), and six regulatory PyrI chains organized as three dimers (R2).

The enzyme catalyses carbamoyl phosphate + L-aspartate = N-carbamoyl-L-aspartate + phosphate + H(+). The protein operates within pyrimidine metabolism; UMP biosynthesis via de novo pathway; (S)-dihydroorotate from bicarbonate: step 2/3. Its function is as follows. Catalyzes the condensation of carbamoyl phosphate and aspartate to form carbamoyl aspartate and inorganic phosphate, the committed step in the de novo pyrimidine nucleotide biosynthesis pathway. The sequence is that of Aspartate carbamoyltransferase catalytic subunit from Leptospira biflexa serovar Patoc (strain Patoc 1 / Ames).